The primary structure comprises 61 residues: Phospholipase A2 (61 aa).

The Ca(2+) site is built by Tyr-27, Gly-29, and Gly-31. Cysteines 28 and 35 form a disulfide. His-38 is an active-site residue. Asp-39 serves as a coordination point for Ca(2+). A disulfide bridge connects residues Cys-41 and Cys-59. Residue Asp-60 is part of the active site.

The protein belongs to the phospholipase A2 family. Group II subfamily. D49 sub-subfamily. As to quaternary structure, homodimer. Requires Ca(2+) as cofactor. Expressed by the venom gland.

Its subcellular location is the secreted. It catalyses the reaction a 1,2-diacyl-sn-glycero-3-phosphocholine + H2O = a 1-acyl-sn-glycero-3-phosphocholine + a fatty acid + H(+). Its function is as follows. Snake venom phospholipase A2 (PLA2) that displays edema-inducing activities. PLA2 catalyzes the calcium-dependent hydrolysis of the 2-acyl groups in 3-sn-phosphoglycerides. This is Phospholipase A2 from Crotalus atrox (Western diamondback rattlesnake).